Here is a 548-residue protein sequence, read N- to C-terminus: Glucan endo-1,3-beta-glucosidase (548 aa).

A signal peptide (tat-type signal) is located at residues 1 to 36; sequence MPHDRKNSSRRAWAALCAAVLAVSGALVGVAAPASA. Positions 38 to 396 constitute a GH64 domain; the sequence is PATIPLTITN…PQAAYIKLDP (359 aa). The active-site Proton donor is Glu153. The active-site Proton acceptor is the Asp169. A Ricin B-type lectin domain is found at 422 to 548; it reads GTGALRIGST…NQTEAQRWTL (127 aa).

The protein belongs to the glycosyl hydrolase 64 family. Predicted to be exported by the Tat system. The position of the signal peptide cleavage has not been experimentally proven.

It localises to the periplasm. The catalysed reaction is Hydrolysis of (1-&gt;3)-beta-D-glucosidic linkages in (1-&gt;3)-beta-D-glucans.. Functionally, lysis of cellular walls containing beta-1,3-glucans. Implicated in the defense against fungal pathogens. The chain is Glucan endo-1,3-beta-glucosidase (glcI) from Arthrobacter sp. (strain YCWD3).